The following is a 95-amino-acid chain: Large ribosomal subunit protein uL23 (95 aa).

It belongs to the universal ribosomal protein uL23 family. As to quaternary structure, part of the 50S ribosomal subunit. Contacts protein L29, and trigger factor when it is bound to the ribosome.

In terms of biological role, one of the early assembly proteins it binds 23S rRNA. One of the proteins that surrounds the polypeptide exit tunnel on the outside of the ribosome. Forms the main docking site for trigger factor binding to the ribosome. The sequence is that of Large ribosomal subunit protein uL23 from Lawsonia intracellularis (strain PHE/MN1-00).